A 191-amino-acid chain; its full sequence is Peptidyl-tRNA hydrolase (191 aa).

Residue Y14 coordinates tRNA. The Proton acceptor role is filled by H19. Positions 64, 66, and 112 each coordinate tRNA.

It belongs to the PTH family. Monomer.

It is found in the cytoplasm. The catalysed reaction is an N-acyl-L-alpha-aminoacyl-tRNA + H2O = an N-acyl-L-amino acid + a tRNA + H(+). Its function is as follows. Hydrolyzes ribosome-free peptidyl-tRNAs (with 1 or more amino acids incorporated), which drop off the ribosome during protein synthesis, or as a result of ribosome stalling. Functionally, catalyzes the release of premature peptidyl moieties from peptidyl-tRNA molecules trapped in stalled 50S ribosomal subunits, and thus maintains levels of free tRNAs and 50S ribosomes. The chain is Peptidyl-tRNA hydrolase from Lachnoclostridium phytofermentans (strain ATCC 700394 / DSM 18823 / ISDg) (Clostridium phytofermentans).